The chain runs to 712 residues: NURS complex subunit red1 (712 aa).

The span at Met-1–Glu-22 shows a compositional bias: basic and acidic residues. 3 disordered regions span residues Met-1 to Pro-71, Asn-107 to Gln-195, and Asp-323 to Met-348. A coiled-coil region spans residues Ile-5–Glu-32. The segment covering Glu-23–Val-42 has biased composition (acidic residues). Low complexity predominate over residues Ser-130–Ser-141. Composition is skewed to polar residues over residues Phe-178–Thr-193 and Asn-327–Met-348. Residues Ser-351 to Lys-379 adopt a coiled-coil conformation. Positions Pro-428–Thr-447 are disordered. The stretch at Ala-471–Ser-501 forms a coiled coil. The segment covering Gln-545 to Glu-567 has biased composition (polar residues). Residues Gln-545–Thr-568 are disordered. The C3H1-type zinc finger occupies Phe-618–Arg-639.

In terms of assembly, interacts with mmi1, pla1 and rrp6.

It localises to the nucleus. Functionally, promotes the exosome-mediated degradation of mRNAs containing a DSR (determinant of selective removal) signal sequence from mitotic cells. This Schizosaccharomyces pombe (strain 972 / ATCC 24843) (Fission yeast) protein is NURS complex subunit red1.